The primary structure comprises 180 residues: Isopentenyl-diphosphate Delta-isomerase (180 aa).

Residues histidine 26 and histidine 32 each coordinate Mn(2+). The Nudix hydrolase domain occupies 30 to 168 (ALHLAFSVLL…PELFTAWFPQ (139 aa)). The active site involves cysteine 70. Mg(2+) is bound at residue cysteine 70. Histidine 72 contributes to the Mn(2+) binding site. Residue glutamate 90 participates in Mg(2+) binding. Glutamate 117 and glutamate 119 together coordinate Mn(2+). The active site involves glutamate 119.

The protein belongs to the IPP isomerase type 1 family. Mg(2+) is required as a cofactor. Mn(2+) serves as cofactor.

It localises to the cytoplasm. The enzyme catalyses isopentenyl diphosphate = dimethylallyl diphosphate. Its pathway is isoprenoid biosynthesis; dimethylallyl diphosphate biosynthesis; dimethylallyl diphosphate from isopentenyl diphosphate: step 1/1. Catalyzes the 1,3-allylic rearrangement of the homoallylic substrate isopentenyl (IPP) to its highly electrophilic allylic isomer, dimethylallyl diphosphate (DMAPP). In Photobacterium profundum (strain SS9), this protein is Isopentenyl-diphosphate Delta-isomerase.